A 454-amino-acid polypeptide reads, in one-letter code: Bifunctional protein GlmU (454 aa).

The interval 1 to 228 (MTLPLHVVIL…PQDVEGANDP (228 aa)) is pyrophosphorylase. UDP-N-acetyl-alpha-D-glucosamine is bound by residues 10–13 (LAAG), K24, Q76, 81–82 (GT), 103–105 (YGD), G138, E153, N168, and N226. D105 contributes to the Mg(2+) binding site. N226 is a binding site for Mg(2+). The tract at residues 229 to 249 (WQLAQLERAWQLRAARALSLQ) is linker. An N-acetyltransferase region spans residues 250-454 (GVRMADPARV…IEGWERPTKK (205 aa)). R332 and K350 together coordinate UDP-N-acetyl-alpha-D-glucosamine. H362 acts as the Proton acceptor in catalysis. Residues Y365 and N376 each contribute to the UDP-N-acetyl-alpha-D-glucosamine site. Residues A379, 385–386 (NY), S404, A422, and R439 each bind acetyl-CoA.

This sequence in the N-terminal section; belongs to the N-acetylglucosamine-1-phosphate uridyltransferase family. The protein in the C-terminal section; belongs to the transferase hexapeptide repeat family. As to quaternary structure, homotrimer. Requires Mg(2+) as cofactor.

Its subcellular location is the cytoplasm. The catalysed reaction is alpha-D-glucosamine 1-phosphate + acetyl-CoA = N-acetyl-alpha-D-glucosamine 1-phosphate + CoA + H(+). The enzyme catalyses N-acetyl-alpha-D-glucosamine 1-phosphate + UTP + H(+) = UDP-N-acetyl-alpha-D-glucosamine + diphosphate. The protein operates within nucleotide-sugar biosynthesis; UDP-N-acetyl-alpha-D-glucosamine biosynthesis; N-acetyl-alpha-D-glucosamine 1-phosphate from alpha-D-glucosamine 6-phosphate (route II): step 2/2. Its pathway is nucleotide-sugar biosynthesis; UDP-N-acetyl-alpha-D-glucosamine biosynthesis; UDP-N-acetyl-alpha-D-glucosamine from N-acetyl-alpha-D-glucosamine 1-phosphate: step 1/1. It participates in bacterial outer membrane biogenesis; LPS lipid A biosynthesis. Its function is as follows. Catalyzes the last two sequential reactions in the de novo biosynthetic pathway for UDP-N-acetylglucosamine (UDP-GlcNAc). The C-terminal domain catalyzes the transfer of acetyl group from acetyl coenzyme A to glucosamine-1-phosphate (GlcN-1-P) to produce N-acetylglucosamine-1-phosphate (GlcNAc-1-P), which is converted into UDP-GlcNAc by the transfer of uridine 5-monophosphate (from uridine 5-triphosphate), a reaction catalyzed by the N-terminal domain. This is Bifunctional protein GlmU from Xanthomonas oryzae pv. oryzae (strain MAFF 311018).